The primary structure comprises 185 residues: Calcium-binding protein CML37 (185 aa).

Polar residues predominate over residues 1-12 (MTLAKNQKSSLS). The interval 1 to 45 (MTLAKNQKSSLSRLYKKVSSKRSESSRNLEDESRTSSNSSGSSSL) is disordered. A compositionally biased stretch (basic and acidic residues) spans 21–34 (KRSESSRNLEDESR). The span at 35-44 (TSSNSSGSSS) shows a compositional bias: low complexity. 4 EF-hand domains span residues 45 to 80 (LNVN…LGGA), 81 to 116 (LSSR…EDGS), 119 to 154 (ERRK…LGES), and 155 to 185 (CTVD…LMMR). 9 residues coordinate Ca(2+): D58, N60, D62, K64, E69, D94, D96, D98, and E105. Residues D168, N170, D172, and E179 each coordinate Ca(2+).

As to quaternary structure, binds to ABCG36. Expressed in cotyledons, stipule, young leaves and at the hypocotyl-root junction. In mature root, expressed in the stele, cortex, emerging lateral root, root tip and root cap. In mature plant, expressed at the base of cauline and floral branches, and in rosette and cauline leaves. Expressed from stage 9 to 14 of flower development in anthers. At stage 15, expressed in carpel, sepals, petals and pollen until dehiscence. Expressed in developing seeds and young siliques.

Potential calcium sensor that binds calcium in vitro. This Arabidopsis thaliana (Mouse-ear cress) protein is Calcium-binding protein CML37.